The sequence spans 159 residues: MAKKPKVASNTIALNKRARHEYFIEEEIEAGLELQGWEVKSLRAGKANIGDSYVTFRNGEAFLFGATITPLNMASTHIVCDPTRTRKLLLNKRELDSLFGKVNRDGMTVVALSLYWKNAWAKVKVGVAKGKKLHDKREDIKDREWQVAKQRIMKNANRG.

The protein belongs to the SmpB family.

The protein localises to the cytoplasm. Its function is as follows. Required for rescue of stalled ribosomes mediated by trans-translation. Binds to transfer-messenger RNA (tmRNA), required for stable association of tmRNA with ribosomes. tmRNA and SmpB together mimic tRNA shape, replacing the anticodon stem-loop with SmpB. tmRNA is encoded by the ssrA gene; the 2 termini fold to resemble tRNA(Ala) and it encodes a 'tag peptide', a short internal open reading frame. During trans-translation Ala-aminoacylated tmRNA acts like a tRNA, entering the A-site of stalled ribosomes, displacing the stalled mRNA. The ribosome then switches to translate the ORF on the tmRNA; the nascent peptide is terminated with the 'tag peptide' encoded by the tmRNA and targeted for degradation. The ribosome is freed to recommence translation, which seems to be the essential function of trans-translation. The chain is SsrA-binding protein from Actinobacillus pleuropneumoniae serotype 5b (strain L20).